A 398-amino-acid chain; its full sequence is Beta-1,6-galactosyltransferase GALT29A (398 aa).

Residues 1–6 lie on the Cytoplasmic side of the membrane; that stretch reads MKRSVR. The chain crosses the membrane as a helical; Signal-anchor for type II membrane protein span at residues 7–27; it reads PLFSALLFAFFAATLICRVAI. Residues 28 to 398 lie on the Lumenal side of the membrane; the sequence is RRSSFSFASA…FKIPLVQVYH (371 aa). N-linked (GlcNAc...) asparagine glycans are attached at residues N221 and N346.

It belongs to the glycosyltransferase 29 family. Interacts with GALT31A.

The protein localises to the golgi apparatus membrane. Its function is as follows. Galactosyltransferase involved in the biosynthesis of type II arabinogalactan. Possesses galactosyltransferase (GalT) activity in vitro, transferring galactose from UDP-galactose to a mixture of various oligosaccharides derived from arabinogalactan proteins. Forms a complex with GALT31A that can work cooperatively to enhance the activities of adding galactose residues at O6 positions to beta-1,6-galactan and beta-1,3-galactan. The chain is Beta-1,6-galactosyltransferase GALT29A from Arabidopsis thaliana (Mouse-ear cress).